The primary structure comprises 453 residues: Ribosomal protein uS12 methylthiotransferase RimO (453 aa).

The region spanning 6 to 116 (PTVGIVSLGC…VLTAVHEAIA (111 aa)) is the MTTase N-terminal domain. [4Fe-4S] cluster-binding residues include C15, C51, C80, C148, C152, and C155. In terms of domain architecture, Radical SAM core spans 134–371 (LTPKHFAYLK…MQLQQQISAN (238 aa)). In terms of domain architecture, TRAM spans 374 to 440 (QAKIGKTIQV…EYDLWATPVG (67 aa)).

This sequence belongs to the methylthiotransferase family. RimO subfamily. Requires [4Fe-4S] cluster as cofactor.

It localises to the cytoplasm. The catalysed reaction is L-aspartate(89)-[ribosomal protein uS12]-hydrogen + (sulfur carrier)-SH + AH2 + 2 S-adenosyl-L-methionine = 3-methylsulfanyl-L-aspartate(89)-[ribosomal protein uS12]-hydrogen + (sulfur carrier)-H + 5'-deoxyadenosine + L-methionine + A + S-adenosyl-L-homocysteine + 2 H(+). Functionally, catalyzes the methylthiolation of an aspartic acid residue of ribosomal protein uS12. The protein is Ribosomal protein uS12 methylthiotransferase RimO of Hydrogenovibrio crunogenus (strain DSM 25203 / XCL-2) (Thiomicrospira crunogena).